The primary structure comprises 244 residues: MAVISMKQLLEAGVHFGHQTRRWNPKMAKYIFTERNGIYIIDLQKTVKKVDEAYNFIREVASEGGNVLFVGTKKQAQDTVKEEAIRAGQYFINERWLGGTLTNFSTIKKRINRLKQLEKMEENGTFEVLPKKEVIILKKEMTRLEKFLGGIKDMPGVPDALFIVDPRKERIAIAEAHKLNIPIVAIVDTNCDPDEIDYVIPANDDAIRAVKLLTGKMADAILEVKQGEDNVAPETTEEVVADAE.

Belongs to the universal ribosomal protein uS2 family.

In Exiguobacterium sibiricum (strain DSM 17290 / CCUG 55495 / CIP 109462 / JCM 13490 / 255-15), this protein is Small ribosomal subunit protein uS2.